Reading from the N-terminus, the 87-residue chain is Small ribosomal subunit protein bS16 (87 aa).

This sequence belongs to the bacterial ribosomal protein bS16 family.

This is Small ribosomal subunit protein bS16 from Buchnera aphidicola subsp. Baizongia pistaciae (strain Bp).